We begin with the raw amino-acid sequence, 478 residues long: Protein ZINC INDUCED FACILITATOR-LIKE 1 (478 aa).

Helical transmembrane passes span 43–63, 81–101, 108–128, 130–150, 169–189, 208–228, 280–300, 317–337, 346–367, 378–398, 415–435, and 453–473; these read IIVL…YFMI, FVGC…GLVA, PVIL…GLSL, FWMA…LGPI, AVST…GFLA, FPFF…TIVS, IIVY…FSLW, VGSV…SLYS, IIVT…PLIA, VTSA…GLFI, IAMT…GIIF, and VFFI…KPFL.

The protein belongs to the major facilitator superfamily. In terms of tissue distribution, predominantly expressed in roots and stomatal guard cells. Detected in anther stamen filaments and shoot apical meristem. In the mature portion of roots, restricted to the cortex. At the root tip, highly expressed in both the cortical and epidermal cell layers of the apical meristem and the transition zone, while absent from the quiescent center or the columella cells. Not detected in lateral root primordia.

Its subcellular location is the cell membrane. It localises to the vacuole membrane. Major facilitator superfamily (MFS) transporter probably involved in 2,4-dichlorophenoxyacetic acid (2,4-D) export. K(+) may be the physiological substrate of the transporter. In terms of biological role, modulates root auxin-related processes. Involved in auxin efflux and acts as a positive regulator of shootward transport at the root apex. May mediate proton efflux from the vacuolar compartment. Functionally, mediates drought stress tolerance by regulating stomatal closure. This chain is Protein ZINC INDUCED FACILITATOR-LIKE 1 (ZIFL1), found in Arabidopsis thaliana (Mouse-ear cress).